The sequence spans 427 residues: 3-phosphoshikimate 1-carboxyvinyltransferase (427 aa).

3-phosphoshikimate-binding residues include lysine 22, serine 23, and arginine 27. Lysine 22 serves as a coordination point for phosphoenolpyruvate. Glycine 96 and arginine 124 together coordinate phosphoenolpyruvate. 7 residues coordinate 3-phosphoshikimate: serine 170, serine 171, glutamine 172, serine 198, aspartate 314, asparagine 337, and lysine 341. Phosphoenolpyruvate is bound at residue glutamine 172. Aspartate 314 serves as the catalytic Proton acceptor. Residues arginine 345, arginine 387, and lysine 412 each coordinate phosphoenolpyruvate.

The protein belongs to the EPSP synthase family. As to quaternary structure, monomer.

Its subcellular location is the cytoplasm. The enzyme catalyses 3-phosphoshikimate + phosphoenolpyruvate = 5-O-(1-carboxyvinyl)-3-phosphoshikimate + phosphate. It participates in metabolic intermediate biosynthesis; chorismate biosynthesis; chorismate from D-erythrose 4-phosphate and phosphoenolpyruvate: step 6/7. Functionally, catalyzes the transfer of the enolpyruvyl moiety of phosphoenolpyruvate (PEP) to the 5-hydroxyl of shikimate-3-phosphate (S3P) to produce enolpyruvyl shikimate-3-phosphate and inorganic phosphate. The chain is 3-phosphoshikimate 1-carboxyvinyltransferase from Sulfurovum sp. (strain NBC37-1).